The following is a 392-amino-acid chain: Formate-dependent phosphoribosylglycinamide formyltransferase (392 aa).

N(1)-(5-phospho-beta-D-ribosyl)glycinamide contacts are provided by residues 22-23 (EL) and Glu-82. ATP contacts are provided by residues Arg-114, Lys-155, 160 to 165 (SSGKGQ), 195 to 198 (EGVV), and Glu-203. In terms of domain architecture, ATP-grasp spans 119 to 308 (RLAAEELGLP…EFALHVRAFL (190 aa)). Positions 267 and 279 each coordinate Mg(2+). N(1)-(5-phospho-beta-D-ribosyl)glycinamide contacts are provided by residues Asp-286, Lys-355, and 362 to 363 (RR).

This sequence belongs to the PurK/PurT family. Homodimer.

It catalyses the reaction N(1)-(5-phospho-beta-D-ribosyl)glycinamide + formate + ATP = N(2)-formyl-N(1)-(5-phospho-beta-D-ribosyl)glycinamide + ADP + phosphate + H(+). It participates in purine metabolism; IMP biosynthesis via de novo pathway; N(2)-formyl-N(1)-(5-phospho-D-ribosyl)glycinamide from N(1)-(5-phospho-D-ribosyl)glycinamide (formate route): step 1/1. Its function is as follows. Involved in the de novo purine biosynthesis. Catalyzes the transfer of formate to 5-phospho-ribosyl-glycinamide (GAR), producing 5-phospho-ribosyl-N-formylglycinamide (FGAR). Formate is provided by PurU via hydrolysis of 10-formyl-tetrahydrofolate. This chain is Formate-dependent phosphoribosylglycinamide formyltransferase, found in Salmonella typhimurium (strain LT2 / SGSC1412 / ATCC 700720).